The primary structure comprises 621 residues: 1-deoxy-D-xylulose-5-phosphate synthase (621 aa).

Thiamine diphosphate-binding positions include H80 and 121–123 (GHS). D152 contributes to the Mg(2+) binding site. Thiamine diphosphate-binding positions include 153–154 (GA), N181, Y288, and E371. N181 provides a ligand contact to Mg(2+).

The protein belongs to the transketolase family. DXPS subfamily. Homodimer. It depends on Mg(2+) as a cofactor. The cofactor is thiamine diphosphate.

The catalysed reaction is D-glyceraldehyde 3-phosphate + pyruvate + H(+) = 1-deoxy-D-xylulose 5-phosphate + CO2. It functions in the pathway metabolic intermediate biosynthesis; 1-deoxy-D-xylulose 5-phosphate biosynthesis; 1-deoxy-D-xylulose 5-phosphate from D-glyceraldehyde 3-phosphate and pyruvate: step 1/1. In terms of biological role, catalyzes the acyloin condensation reaction between C atoms 2 and 3 of pyruvate and glyceraldehyde 3-phosphate to yield 1-deoxy-D-xylulose-5-phosphate (DXP). This chain is 1-deoxy-D-xylulose-5-phosphate synthase, found in Pectobacterium atrosepticum (strain SCRI 1043 / ATCC BAA-672) (Erwinia carotovora subsp. atroseptica).